Consider the following 313-residue polypeptide: MMLFGCRRSLWCALSFLGAAAGYRVGSAYLGTSVLQNQTPFELRNSKVVTQCTMKVELIPALTDNYMYLLIDEESKEAAIVDPVQPQKVVDAVKKHGVKLTTVLTTHHHWDHAGGNEKLVKMVSGLKVYGGDSRIGALTQKVSHLTTFQVGSLHVKCLYTPCHTSGHICYYVTKPNSTEPPAVFTGDTLFVAGCGKFFEGTPEEMYAALIEVLGRLPPETRVYCGHEYTINNLKFARHVEPCNDAIKQKLAWAKETYNSGEPTIPSTLAEEFTFNPFMRVREKSVQEHAGERDPISTMGAIRKEKDHFKVPKD.

Zn(2+) contacts are provided by H107, H109, D111, H112, H163, and D187. Substrate is bound by residues 196-198 and 226-228; these read KFF and HEY. H226 contributes to the Zn(2+) binding site. Basic and acidic residues-rich tracts occupy residues 285–294 and 301–313; these read VQEHAGERDP and IRKEKDHFKVPKD. Positions 285–313 are disordered; the sequence is VQEHAGERDPISTMGAIRKEKDHFKVPKD. Residue 302–305 participates in substrate binding; the sequence is RKEK.

The protein belongs to the metallo-beta-lactamase superfamily. Glyoxalase II family. In terms of assembly, monomer. Zn(2+) serves as cofactor.

The protein localises to the mitochondrion matrix. It localises to the cytoplasm. The catalysed reaction is an S-(2-hydroxyacyl)glutathione + H2O = a 2-hydroxy carboxylate + glutathione + H(+). It carries out the reaction (R)-S-lactoylglutathione + H2O = (R)-lactate + glutathione + H(+). Functionally, thiolesterase that catalyzes the hydrolysis of S-D-lactoyl-glutathione to form glutathione and D-lactic acid. This is Hydroxyacylglutathione hydrolase, mitochondrial (hagh) from Xenopus tropicalis (Western clawed frog).